The sequence spans 100 residues: Small ribosomal subunit protein uS14c (100 aa).

It belongs to the universal ribosomal protein uS14 family. As to quaternary structure, part of the 30S ribosomal subunit.

The protein localises to the plastid. It localises to the chloroplast. Its function is as follows. Binds 16S rRNA, required for the assembly of 30S particles. The protein is Small ribosomal subunit protein uS14c of Anthoceros angustus (Hornwort).